The primary structure comprises 30 residues: V-type proton ATPase catalytic subunit A isoform 2 (30 aa).

Belongs to the ATPase alpha/beta chains family. As to quaternary structure, V-ATPase is a heteromultimeric enzyme composed of a peripheral catalytic V1 complex (main components: subunits A, B, C, D, E, and F) attached to an integral membrane V0 proton pore complex (main component: the proteolipid protein).

The catalysed reaction is ATP + H2O + 4 H(+)(in) = ADP + phosphate + 5 H(+)(out). Functionally, catalytic subunit of the peripheral V1 complex of vacuolar ATPase. V-ATPase vacuolar ATPase is responsible for acidifying a variety of intracellular compartments in eukaryotic cells. The polypeptide is V-type proton ATPase catalytic subunit A isoform 2 (Equisetum arvense (Field horsetail)).